Consider the following 162-residue polypeptide: Selenoprotein F (162 aa).

A signal peptide spans 1 to 28 (MAAGQGGWLRPALGLRLLLATAFQAVSA). Residue selenocysteine 93 is a non-standard amino acid, selenocysteine.

This sequence belongs to the selenoprotein M/F family. In terms of assembly, forms a tight complex with UGGT1/UGCGL1. Interacts with UGGT2/UGCGL2. Interacts with RDH11. In terms of tissue distribution, highest levels in prostate, lower levels in brain, lung, thyroid gland, and large intestine.

The protein resides in the endoplasmic reticulum lumen. Its function is as follows. May be involved in redox reactions associated with the formation of disulfide bonds. May contribute to the quality control of protein folding in the endoplasmic reticulum. May regulate protein folding by enhancing the catalytic activity of UGGT1/UGCGL1 and UGGT2/UGCGL2. The protein is Selenoprotein F of Rattus norvegicus (Rat).